The primary structure comprises 205 residues: Probable thymidylate kinase (205 aa).

Position 7–14 (7–14 (GIDGAGKS)) interacts with ATP.

The protein belongs to the thymidylate kinase family.

The enzyme catalyses dTMP + ATP = dTDP + ADP. This Thermococcus onnurineus (strain NA1) protein is Probable thymidylate kinase.